A 122-amino-acid polypeptide reads, in one-letter code: U7 snRNA-associated Sm-like protein LSm10 (122 aa).

Positions Ser-16–Val-88 constitute a Sm domain.

It belongs to the snRNP Sm proteins family. As to quaternary structure, component of the heptameric ring U7 snRNP complex, or U7 Sm protein core complex, at least composed of LSM10, LSM11, SNRPB, SNRPD3, SNRPE, SNRPF, SNRPG and U7 snRNA. Formation of the U7 snRNP is an ATP-dependent process mediated by a specialized SMN complex containing at least the Sm protein core complex and additionally, the U7-specific LSM10 and LSM11 proteins. Interacts with CLNS1A and SMN. Post-translationally, not methylated. Methylation is not necessary for interaction with SMN.

The protein resides in the nucleus. Appears to function in the U7 snRNP complex that is involved in histone 3'-end processing. Increases U7 snRNA levels but not histone 3'-end pre-mRNA processing activity, when overexpressed. Required for cell cycle progression from G1 to S phases. Binds specifically to U7 snRNA. Binds to the downstream cleavage product (DCP) of histone pre-mRNA. This is U7 snRNA-associated Sm-like protein LSm10 (Lsm10) from Mus musculus (Mouse).